We begin with the raw amino-acid sequence, 251 residues long: Putative glutathione-independent glyoxalase hsp3105 (251 aa).

This sequence belongs to the peptidase C56 family. HSP31-like subfamily.

Its subcellular location is the cytoplasm. It is found in the nucleus. The catalysed reaction is methylglyoxal + H2O = (R)-lactate + H(+). Its function is as follows. May catalyze the conversion of methylglyoxal (MG) to D-lactate in a single glutathione (GSH)-independent step. May play a role in detoxifying endogenously produced glyoxals. Involved in protection against reactive oxygen species (ROS). The chain is Putative glutathione-independent glyoxalase hsp3105 from Schizosaccharomyces pombe (strain 972 / ATCC 24843) (Fission yeast).